The chain runs to 145 residues: Large ribosomal subunit protein uL15 (145 aa).

Residues 1-54 are disordered; the sequence is MKLNELKYTPGSKKEATRVGRGMASGKGKTATRGHKGQNSRSGGGVRPGFEGGQ. Residues 42-52 show a composition bias toward gly residues; sequence SGGGVRPGFEG.

This sequence belongs to the universal ribosomal protein uL15 family. As to quaternary structure, part of the 50S ribosomal subunit.

Binds to the 23S rRNA. In Mycoplasma capricolum subsp. capricolum (strain California kid / ATCC 27343 / NCTC 10154), this protein is Large ribosomal subunit protein uL15.